A 437-amino-acid polypeptide reads, in one-letter code: Protein farnesyltransferase subunit beta (437 aa).

PFTB repeat units follow at residues 123-164, 174-215, 222-263, 270-312, and 332-374; these read ATDV…CIIG, REKL…SLTN, FEGT…VILK, LKSL…PLLH, and QQAL…SIAQ. (2E,6E)-farnesyl diphosphate is bound by residues 248–251 and 291–294; these read HGGY and RCNK. D297 and C299 together coordinate Zn(2+). Position 300–303 (300–303) interacts with (2E,6E)-farnesyl diphosphate; it reads YSFW. Zn(2+) is bound at residue H362. S432 bears the Phosphoserine mark. T436 carries the post-translational modification Phosphothreonine.

Belongs to the protein prenyltransferase subunit beta family. Heterodimer of FNTA and FNTB. It depends on Zn(2+) as a cofactor.

It carries out the reaction L-cysteinyl-[protein] + (2E,6E)-farnesyl diphosphate = S-(2E,6E)-farnesyl-L-cysteinyl-[protein] + diphosphate. Essential subunit of the farnesyltransferase complex. Catalyzes the transfer of a farnesyl moiety from farnesyl diphosphate to a cysteine at the fourth position from the C-terminus of several proteins having the C-terminal sequence Cys-aliphatic-aliphatic-X. In Rattus norvegicus (Rat), this protein is Protein farnesyltransferase subunit beta (Fntb).